A 178-amino-acid polypeptide reads, in one-letter code: Large ribosomal subunit protein eL20y (178 aa).

It belongs to the eukaryotic ribosomal protein eL20 family.

This is Large ribosomal subunit protein eL20y (RPL18AB) from Arabidopsis thaliana (Mouse-ear cress).